The sequence spans 258 residues: Phosphoadenosine 5'-phosphosulfate reductase (258 aa).

Residue C244 is the Nucleophile; cysteine thiosulfonate intermediate of the active site.

It belongs to the PAPS reductase family. CysH subfamily.

It is found in the cytoplasm. It catalyses the reaction [thioredoxin]-disulfide + sulfite + adenosine 3',5'-bisphosphate + 2 H(+) = [thioredoxin]-dithiol + 3'-phosphoadenylyl sulfate. The protein operates within sulfur metabolism; hydrogen sulfide biosynthesis; sulfite from sulfate: step 3/3. Catalyzes the formation of sulfite from phosphoadenosine 5'-phosphosulfate (PAPS) using thioredoxin as an electron donor. The chain is Phosphoadenosine 5'-phosphosulfate reductase from Vibrio atlanticus (strain LGP32) (Vibrio splendidus (strain Mel32)).